A 253-amino-acid chain; its full sequence is Glucosamine-6-phosphate deaminase (253 aa).

The active-site Proton acceptor; for enolization step is the aspartate 65. The active-site For ring-opening step is asparagine 133. Histidine 135 acts as the Proton acceptor; for ring-opening step in catalysis. Glutamate 140 (for ring-opening step) is an active-site residue.

The protein belongs to the glucosamine/galactosamine-6-phosphate isomerase family. NagB subfamily.

It catalyses the reaction alpha-D-glucosamine 6-phosphate + H2O = beta-D-fructose 6-phosphate + NH4(+). The protein operates within amino-sugar metabolism; N-acetylneuraminate degradation; D-fructose 6-phosphate from N-acetylneuraminate: step 5/5. Its function is as follows. Catalyzes the reversible isomerization-deamination of glucosamine 6-phosphate (GlcN6P) to form fructose 6-phosphate (Fru6P) and ammonium ion. The chain is Glucosamine-6-phosphate deaminase from Corynebacterium glutamicum (strain R).